The following is a 153-amino-acid chain: Ribosome maturation factor RimP (153 aa).

This sequence belongs to the RimP family.

The protein resides in the cytoplasm. Functionally, required for maturation of 30S ribosomal subunits. This chain is Ribosome maturation factor RimP, found in Pelotomaculum thermopropionicum (strain DSM 13744 / JCM 10971 / SI).